A 161-amino-acid chain; its full sequence is uncharacterized protein (161 aa).

A helical transmembrane segment spans residues 30–50 (GVILFRLLGVILFRLLGVILF).

The protein resides in the membrane. This is an uncharacterized protein from Homo sapiens (Human).